Consider the following 500-residue polypeptide: Glutathione gamma-glutamylcysteinyltransferase 1 (500 aa).

Residues 1-221 enclose the Peptidase C83 domain; the sequence is MEVASLYRRV…GFMLVSRRSS (221 aa). Catalysis depends on residues Cys-56, His-162, and Asp-180.

It belongs to the phytochelatin synthase family. In terms of tissue distribution, expressed in roots and shoots.

The catalysed reaction is [Glu(-Cys)](n)-Gly + glutathione + H(+) = [Glu(-Cys)](n+1)-Gly + glycine. Requires cadmium for activity. Its function is as follows. Involved in the synthesis of phytochelatins (PC) and homophytochelatins (hPC), the heavy-metal-binding peptides of plants. The polypeptide is Glutathione gamma-glutamylcysteinyltransferase 1 (PCS1) (Triticum aestivum (Wheat)).